The sequence spans 118 residues: MIKGIGLDMIDLERVKQVLEKNPRFIERVLTEKEIKQFEKYEGSRKIEFLAGRFAAKEAYAKANGTGFGKHLSFTDVEILQVEDGRPHVTMPIKSGETVFVSITHTARSAAAQVIIEI.

Residues Asp-8 and Glu-58 each coordinate Mg(2+).

Belongs to the P-Pant transferase superfamily. AcpS family. Mg(2+) is required as a cofactor.

The protein localises to the cytoplasm. It catalyses the reaction apo-[ACP] + CoA = holo-[ACP] + adenosine 3',5'-bisphosphate + H(+). Functionally, transfers the 4'-phosphopantetheine moiety from coenzyme A to a Ser of acyl-carrier-protein. The sequence is that of Holo-[acyl-carrier-protein] synthase from Listeria welshimeri serovar 6b (strain ATCC 35897 / DSM 20650 / CCUG 15529 / CIP 8149 / NCTC 11857 / SLCC 5334 / V8).